The sequence spans 430 residues: Histidinol dehydrogenase (430 aa).

3 residues coordinate NAD(+): tyrosine 130, glutamine 191, and asparagine 214. Residues serine 237, glutamine 259, and histidine 262 each coordinate substrate. Residues glutamine 259 and histidine 262 each contribute to the Zn(2+) site. Residues glutamate 327 and histidine 328 each act as proton acceptor in the active site. Residues histidine 328, aspartate 361, glutamate 415, and histidine 420 each coordinate substrate. Aspartate 361 lines the Zn(2+) pocket. Residue histidine 420 participates in Zn(2+) binding.

The protein belongs to the histidinol dehydrogenase family. Zn(2+) is required as a cofactor.

It carries out the reaction L-histidinol + 2 NAD(+) + H2O = L-histidine + 2 NADH + 3 H(+). Its pathway is amino-acid biosynthesis; L-histidine biosynthesis; L-histidine from 5-phospho-alpha-D-ribose 1-diphosphate: step 9/9. Its function is as follows. Catalyzes the sequential NAD-dependent oxidations of L-histidinol to L-histidinaldehyde and then to L-histidine. The sequence is that of Histidinol dehydrogenase from Brucella melitensis biotype 1 (strain ATCC 23456 / CCUG 17765 / NCTC 10094 / 16M).